The chain runs to 461 residues: MRVLIKNGTVVNADGQAKQDLLIESGIVRQLGNNISPQLPYEEIDATGCYVFPGGVDVHTHFNIDVGIARSCDDFFTGTRAAVCGGTTTIIDHMGFGPNGCRLRHQLEVYRGYAAHKAVIDYSFHGVIQHINHAILDEIPMMVEEGLSSFKLYLTYQYKLNDDEVLQALRRLHESGALTTVHPENDAAIASKRAEFIAAGLTAPRYHALSRPLECEAEAIARMINLAQIAGNAPLYIVHLSNGLGLDYLRLARANHQPVWVETCPQYLLLDERSYDTEDGMKFILSPPLRNIREQDKLWCGISDGAIDVVATDHCTFSMAQRLQISKGDFSRCPNGLPGVENRMQLLFSSGVMTGRITPERFVELTSAMPARLFGLWPQKGLLAPGSDGDVVIIDPRQSQQIQHRHLHDNADYSPWEGFTCQGAIVRTLSRGETIFCDGTFTGKAGRGRFLRRKPFVPPVL.

3 residues coordinate a divalent metal cation: His-59, His-61, and Lys-151. Lys-151 is subject to N6-carboxylysine. Tyr-156 provides a ligand contact to substrate. A divalent metal cation contacts are provided by His-182 and His-239. Ser-286 contributes to the substrate binding site. Asp-313 is a binding site for a divalent metal cation. Asn-335 contributes to the substrate binding site.

This sequence belongs to the metallo-dependent hydrolases superfamily. Hydantoinase/dihydropyrimidinase family. As to quaternary structure, homotetramer. It depends on a divalent metal cation as a cofactor. Carboxylation allows a single lysine to coordinate two divalent metal cations.

It carries out the reaction D-5-phenylhydantoin + H2O = N-carbamoyl-D-phenylglycine + H(+). Catalyzes the stereospecific hydrolysis of the cyclic amide bond of D-hydantoin derivatives with an aromatic side chains at the 5'-position. Has no activity on dihydropyrimidines. The physiological function is unknown. In Escherichia coli (strain SE11), this protein is D-phenylhydantoinase.